A 391-amino-acid polypeptide reads, in one-letter code: Phosphoglycerate kinase (391 aa).

Substrate contacts are provided by residues 21 to 23, Arg36, 59 to 62, Arg113, and Arg146; these read DLN and HLGR. ATP is bound by residues Lys197, Glu319, and 345–348; that span reads GGDT.

This sequence belongs to the phosphoglycerate kinase family. As to quaternary structure, monomer.

Its subcellular location is the cytoplasm. It catalyses the reaction (2R)-3-phosphoglycerate + ATP = (2R)-3-phospho-glyceroyl phosphate + ADP. The protein operates within carbohydrate degradation; glycolysis; pyruvate from D-glyceraldehyde 3-phosphate: step 2/5. The polypeptide is Phosphoglycerate kinase (Xanthomonas oryzae pv. oryzae (strain MAFF 311018)).